Here is a 106-residue protein sequence, read N- to C-terminus: Small ribosomal subunit protein uS10 (106 aa).

The protein belongs to the universal ribosomal protein uS10 family. In terms of assembly, part of the 30S ribosomal subunit.

Involved in the binding of tRNA to the ribosomes. The protein is Small ribosomal subunit protein uS10 of Prochlorococcus marinus (strain MIT 9301).